Reading from the N-terminus, the 172-residue chain is Large ribosomal subunit protein uL10 (172 aa).

The protein belongs to the universal ribosomal protein uL10 family. Part of the ribosomal stalk of the 50S ribosomal subunit. The N-terminus interacts with L11 and the large rRNA to form the base of the stalk. The C-terminus forms an elongated spine to which L12 dimers bind in a sequential fashion forming a multimeric L10(L12)X complex.

Forms part of the ribosomal stalk, playing a central role in the interaction of the ribosome with GTP-bound translation factors. The chain is Large ribosomal subunit protein uL10 from Brucella abortus (strain S19).